The primary structure comprises 78 residues: Putative membrane protein insertion efficiency factor (78 aa).

The protein belongs to the UPF0161 family.

Its subcellular location is the cell inner membrane. Its function is as follows. Could be involved in insertion of integral membrane proteins into the membrane. The chain is Putative membrane protein insertion efficiency factor from Prochlorococcus marinus subsp. pastoris (strain CCMP1986 / NIES-2087 / MED4).